Consider the following 370-residue polypeptide: Homospermidine synthase 1 (370 aa).

Belongs to the deoxyhypusine synthase family. Homotetramer. The cofactor is NAD(+). Post-translationally, the N-terminus is blocked. In terms of tissue distribution, expressed in roots.

It carries out the reaction putrescine + spermidine = sym-homospermidine + propane-1,3-diamine. It participates in alkaloid biosynthesis; pyrrolizidine alkaloid biosynthesis. Catalyzes the transfer of an aminobutyl unit from spermidine onto putrescine. The resulting polyamine homospermidine is a precursor in the biosynthesis of pyrrolizidine alkaloids. This is Homospermidine synthase 1 (HSS1) from Senecio vernalis (Spring groundsel).